The following is a 141-amino-acid chain: Large ribosomal subunit protein uL11 (141 aa).

This sequence belongs to the universal ribosomal protein uL11 family. As to quaternary structure, part of the ribosomal stalk of the 50S ribosomal subunit. Interacts with L10 and the large rRNA to form the base of the stalk. L10 forms an elongated spine to which L12 dimers bind in a sequential fashion forming a multimeric L10(L12)X complex. Post-translationally, one or more lysine residues are methylated.

Its function is as follows. Forms part of the ribosomal stalk which helps the ribosome interact with GTP-bound translation factors. This Prochlorococcus marinus (strain MIT 9313) protein is Large ribosomal subunit protein uL11.